Consider the following 116-residue polypeptide: Holo-[acyl-carrier-protein] synthase (116 aa).

2 residues coordinate Mg(2+): Asp-8 and Glu-59.

Belongs to the P-Pant transferase superfamily. AcpS family. The cofactor is Mg(2+).

Its subcellular location is the cytoplasm. It carries out the reaction apo-[ACP] + CoA = holo-[ACP] + adenosine 3',5'-bisphosphate + H(+). Functionally, transfers the 4'-phosphopantetheine moiety from coenzyme A to a Ser of acyl-carrier-protein. The polypeptide is Holo-[acyl-carrier-protein] synthase (Staphylococcus saprophyticus subsp. saprophyticus (strain ATCC 15305 / DSM 20229 / NCIMB 8711 / NCTC 7292 / S-41)).